Here is a 452-residue protein sequence, read N- to C-terminus: MGFFSSLGQINVWSLLRPIIESDLEVIVIALGGYVLAKKGFLPRDAQKVISSLNVYFFTPCLVFEKVGNGLNLKMLIDLSLLPVFYVIISAASILISFLLAKLFRLTPRQRNFATACITFQNSNSLPLALVSSLATTVKDLLWDKIPDDTPDKVASRGIMYLLIFSQLGQALRWSYGYRILLSPNQPEDPLPIGNRSWSHSDVNEEEIQNLLASSANVDGVQNSVQANEGSTVQTDSSAISKNDNVQVETSNEEVGGFGAASSKISKFIVLLLDFFSPPLYSLFIALFIAVVPPLQRFFFEEGSFVEGSITSGIRMAGQVAVPMILVVLGASLATDISKTEPTQEVRKNNDTRVIIVCLLGRMVVVPLALLPAFSLLSYFSEISTVDDPVFVVVIFLLVGSPTAIQLTQICQLNGVFERECAKVLWWSYAVFTPPNSLLLAFASLLVVKWTK.

Transmembrane regions (helical) follow at residues 18–38 (PIIESDLEVIVIALGGYVLAK), 81–101 (LLPVFYVIISAASILISFLLA), 269–289 (IVLLLDFFSPPLYSLFIALFI), 317–337 (AGQVAVPMILVVLGASLATDI), 354–374 (VIIVCLLGRMVVVPLALLPAF), 390–410 (VFVVVIFLLVGSPTAIQLTQI), and 428–448 (SYAVFTPPNSLLLAFASLLVV).

It belongs to the auxin efflux carrier (TC 2.A.69) family.

It localises to the membrane. This is an uncharacterized protein from Schizosaccharomyces pombe (strain 972 / ATCC 24843) (Fission yeast).